We begin with the raw amino-acid sequence, 414 residues long: Eukaryotic initiation factor 4A-3 (414 aa).

Residues 41–69 carry the Q motif motif; the sequence is ESFDDMGLQENLLRGIYAYGFEKPSAIQQ. The region spanning 72–242 is the Helicase ATP-binding domain; that stretch reads IVPFCKGLDV…RKFMNKPVRI (171 aa). 85–92 is an ATP binding site; that stretch reads AQSGTGKT. Residues 190-193 carry the DEAD box motif; the sequence is DEAD. The Helicase C-terminal domain maps to 253-414; that stretch reads GIKQFYVNVE…ELPANVADLL (162 aa).

The protein belongs to the DEAD box helicase family. eIF4A subfamily. As to quaternary structure, eIF4F is a multi-subunit complex, the composition of which varies with external and internal environmental conditions. It is composed of at least EIF4A, EIF4E and EIF4G. Interacts with DRM2 (via UBA domains).

Its subcellular location is the cytoplasm. It localises to the nucleus. It catalyses the reaction ATP + H2O = ADP + phosphate + H(+). ATP-dependent RNA helicase which is a subunit of the eIF4F complex involved in cap recognition and is required for mRNA binding to ribosome. In the current model of translation initiation, eIF4A unwinds RNA secondary structures in the 5'-UTR of mRNAs which is necessary to allow efficient binding of the small ribosomal subunit, and subsequent scanning for the initiator codon. This is Eukaryotic initiation factor 4A-3 from Oryza sativa subsp. japonica (Rice).